We begin with the raw amino-acid sequence, 313 residues long: Aspartate carbamoyltransferase catalytic subunit (313 aa).

Residues Arg51 and Thr52 each contribute to the carbamoyl phosphate site. An L-aspartate-binding site is contributed by Lys80. Carbamoyl phosphate contacts are provided by Arg101, His129, and Gln132. L-aspartate contacts are provided by Arg162 and Arg224. Carbamoyl phosphate-binding residues include Leu263 and Pro264.

Belongs to the aspartate/ornithine carbamoyltransferase superfamily. ATCase family. Heterododecamer (2C3:3R2) of six catalytic PyrB chains organized as two trimers (C3), and six regulatory PyrI chains organized as three dimers (R2).

The enzyme catalyses carbamoyl phosphate + L-aspartate = N-carbamoyl-L-aspartate + phosphate + H(+). Its pathway is pyrimidine metabolism; UMP biosynthesis via de novo pathway; (S)-dihydroorotate from bicarbonate: step 2/3. Catalyzes the condensation of carbamoyl phosphate and aspartate to form carbamoyl aspartate and inorganic phosphate, the committed step in the de novo pyrimidine nucleotide biosynthesis pathway. This is Aspartate carbamoyltransferase catalytic subunit from Bacteroides thetaiotaomicron (strain ATCC 29148 / DSM 2079 / JCM 5827 / CCUG 10774 / NCTC 10582 / VPI-5482 / E50).